A 315-amino-acid polypeptide reads, in one-letter code: tRNA dimethylallyltransferase (315 aa).

Residue 10 to 17 participates in ATP binding; it reads GPTATGKS. Substrate is bound at residue 12–17; that stretch reads TATGKS. Residues 35 to 38 form an interaction with substrate tRNA region; sequence DSMQ.

This sequence belongs to the IPP transferase family. In terms of assembly, monomer. It depends on Mg(2+) as a cofactor.

The catalysed reaction is adenosine(37) in tRNA + dimethylallyl diphosphate = N(6)-dimethylallyladenosine(37) in tRNA + diphosphate. Catalyzes the transfer of a dimethylallyl group onto the adenine at position 37 in tRNAs that read codons beginning with uridine, leading to the formation of N6-(dimethylallyl)adenosine (i(6)A). This chain is tRNA dimethylallyltransferase, found in Caldanaerobacter subterraneus subsp. tengcongensis (strain DSM 15242 / JCM 11007 / NBRC 100824 / MB4) (Thermoanaerobacter tengcongensis).